The following is a 115-amino-acid chain: Large ribosomal subunit protein bL20 (115 aa).

It belongs to the bacterial ribosomal protein bL20 family.

In terms of biological role, binds directly to 23S ribosomal RNA and is necessary for the in vitro assembly process of the 50S ribosomal subunit. It is not involved in the protein synthesizing functions of that subunit. This chain is Large ribosomal subunit protein bL20, found in Prochlorococcus marinus (strain NATL2A).